The sequence spans 305 residues: MNDAKKYIVSVLILLVAGMFGGCIKEDYSDCPRPFRLTVRAWDADMQDITETGAVQRVVIFVFDETGRRIDRLMMDAAQVAARKPIPLEYDGPTTVSFVAWANPDDHMLEETANVQNVKDLFFRLSSTDGIAQSPGDLFSGVLTCPIEYGSIEQGTDQTVDIYRRTAQVHIIIRGYQEWLDANGPRQLPDYADILLGETPDTYTGLAELIGNAVQYRPDGQIQNGDFISPIFRVYPTLDTTPLHLKLYAYGQELLNISTGSDGVPFIPVIGKMLNIYIDLRGANLNVLVSVTPWDVVQQQQYAEY.

An N-terminal signal peptide occupies residues 1–22; the sequence is MNDAKKYIVSVLILLVAGMFGG. Residue cysteine 23 is the site of N-palmitoyl cysteine attachment. Cysteine 23 is lipidated: S-diacylglycerol cysteine.

This sequence belongs to the bacteroidetes fimbrillin superfamily. FimB/Mfa2 family. As to quaternary structure, fimB is not part of the fimbrium itself, but anchors the fimbrium in the outer membrane. Linear, head-to-tail oligomerization of fimbrial subunits mediates assembly of the fimbrium stalk, while the minor components FimC, FimD and FimE probably form the fimbrium tip. The anchoring subunit FimB limits fimbrium length and is important for solid fimbrium attachment to the outer membrane. In its absence, the major fimbriae become very long and are easily detached from the membrane.

Its subcellular location is the cell outer membrane. In terms of biological role, anchoring subunit of the major fimbriae. Regulates fimbrial length. These filamentous pili are attached to the cell surface; they mediate biofilm formation, adhesion onto host cells and onto other bacteria that are part of the oral microbiome. Fimbriae of P.gingivalis are major virulence factors. In Porphyromonas gingivalis (Bacteroides gingivalis), this protein is Major fimbrium anchoring subunit FimB.